We begin with the raw amino-acid sequence, 237 residues long: Urease accessory protein UreF (237 aa).

It belongs to the UreF family. As to quaternary structure, ureD, UreF and UreG form a complex that acts as a GTP-hydrolysis-dependent molecular chaperone, activating the urease apoprotein by helping to assemble the nickel containing metallocenter of UreC. The UreE protein probably delivers the nickel.

Its subcellular location is the cytoplasm. Its function is as follows. Required for maturation of urease via the functional incorporation of the urease nickel metallocenter. In Streptococcus salivarius (strain 57.I), this protein is Urease accessory protein UreF.